The primary structure comprises 35 residues: Natriuretic peptide TNPb (35 aa).

C9 and C25 form a disulfide bridge.

As to expression, expressed by the venom gland.

It is found in the secreted. Its function is as follows. Snake venom natriuretic peptide that exhibits vasoactive and probable hypotensive activity. Is only weakly active on natriuretic peptide receptor-C (NPR3). Stimulates cGMP production through the natriuretic peptide receptor 1 (NPR1) with moderate potencies for the rat NPR1 (EC(50)=1200 nM), and very weak potencies over human NPR1 (30% activation at 10 uM). In vivo, does not impact systolic and diastolic blood pressure, as well as heart rate, when intravenously injected in conscious rabbits. Does not affect the bradycardia due to cardiac afferent stimulation (Bezold-Jarisch reflex). The sequence is that of Natriuretic peptide TNPb from Oxyuranus microlepidotus (Inland taipan).